We begin with the raw amino-acid sequence, 220 residues long: Small ribosomal subunit protein uS3c (220 aa).

The 78-residue stretch at 43 to 120 (IQHYVEKNTR…RLNIAIIRVA (78 aa)) folds into the KH type-2 domain.

It belongs to the universal ribosomal protein uS3 family. As to quaternary structure, part of the 30S ribosomal subunit.

It localises to the plastid. It is found in the chloroplast. This Piper cenocladum (Ant piper) protein is Small ribosomal subunit protein uS3c (rps3).